Reading from the N-terminus, the 443-residue chain is Probable glycine dehydrogenase (decarboxylating) subunit 1 (443 aa).

The protein belongs to the GcvP family. N-terminal subunit subfamily. In terms of assembly, the glycine cleavage system is composed of four proteins: P, T, L and H. In this organism, the P 'protein' is a heterodimer of two subunits.

It carries out the reaction N(6)-[(R)-lipoyl]-L-lysyl-[glycine-cleavage complex H protein] + glycine + H(+) = N(6)-[(R)-S(8)-aminomethyldihydrolipoyl]-L-lysyl-[glycine-cleavage complex H protein] + CO2. The glycine cleavage system catalyzes the degradation of glycine. The P protein binds the alpha-amino group of glycine through its pyridoxal phosphate cofactor; CO(2) is released and the remaining methylamine moiety is then transferred to the lipoamide cofactor of the H protein. This Endomicrobium trichonymphae protein is Probable glycine dehydrogenase (decarboxylating) subunit 1.